The following is a 70-amino-acid chain: Putative membrane protein insertion efficiency factor (70 aa).

Belongs to the UPF0161 family.

It is found in the cell inner membrane. Functionally, could be involved in insertion of integral membrane proteins into the membrane. This Francisella tularensis subsp. tularensis (strain SCHU S4 / Schu 4) protein is Putative membrane protein insertion efficiency factor.